The sequence spans 95 residues: Aspartyl/glutamyl-tRNA(Asn/Gln) amidotransferase subunit C (95 aa).

It belongs to the GatC family. Heterotrimer of A, B and C subunits.

The enzyme catalyses L-glutamyl-tRNA(Gln) + L-glutamine + ATP + H2O = L-glutaminyl-tRNA(Gln) + L-glutamate + ADP + phosphate + H(+). It carries out the reaction L-aspartyl-tRNA(Asn) + L-glutamine + ATP + H2O = L-asparaginyl-tRNA(Asn) + L-glutamate + ADP + phosphate + 2 H(+). Functionally, allows the formation of correctly charged Asn-tRNA(Asn) or Gln-tRNA(Gln) through the transamidation of misacylated Asp-tRNA(Asn) or Glu-tRNA(Gln) in organisms which lack either or both of asparaginyl-tRNA or glutaminyl-tRNA synthetases. The reaction takes place in the presence of glutamine and ATP through an activated phospho-Asp-tRNA(Asn) or phospho-Glu-tRNA(Gln). This chain is Aspartyl/glutamyl-tRNA(Asn/Gln) amidotransferase subunit C, found in Clostridium botulinum (strain 657 / Type Ba4).